The following is a 72-amino-acid chain: UPF0154 protein RBAM_017710 (72 aa).

A helical membrane pass occupies residues 4–24 (WVGILVGVVALLIGVALGFFI).

Belongs to the UPF0154 family.

Its subcellular location is the cell membrane. This Bacillus velezensis (strain DSM 23117 / BGSC 10A6 / LMG 26770 / FZB42) (Bacillus amyloliquefaciens subsp. plantarum) protein is UPF0154 protein RBAM_017710.